We begin with the raw amino-acid sequence, 471 residues long: Ribonuclease 3 (471 aa).

Residues Met-1 to Lys-10 are compositionally biased toward basic residues. Disordered stretches follow at residues Met-1–Ile-29 and Asn-168–Ala-189. The segment covering Glu-20–Ile-29 has biased composition (polar residues). Positions Lys-172 to Tyr-184 are enriched in acidic residues. The 105-residue stretch at Leu-227 to Pro-331 folds into the RNase III domain. A DRBM domain is found at Asn-369–Met-437. The disordered stretch occupies residues Ser-451–Ser-471. Positions Lys-461–Ser-471 are enriched in basic residues.

It catalyses the reaction Endonucleolytic cleavage to 5'-phosphomonoester.. In terms of biological role, dsRNA-specific nuclease that cleaves eukaryotic pre-ribosomal RNA at the U3 snoRNP-dependent A0 site in the 5'-external transcribed spacer (ETS) and in the 3'-ETS. In vitro, cleaves synthetic 5'-ETS RNA A0 site in the absence of snoRNA or other factors. Has an essential growth function in addition to pre-rRNA processing. In Saccharomyces cerevisiae (strain ATCC 204508 / S288c) (Baker's yeast), this protein is Ribonuclease 3 (RNT1).